The sequence spans 380 residues: MEPRAGVSKQDIREQIWDYMESQNLADFPRPVHHRIPNFKGASRAAEHFPRLQAFKMARTIKVNPDAPQKNARFFVLESKKTLLVPTPRLRTGLFNKITPPPGATKDILRKCATSQGVRNYSTPVGLDSKVLVDLVVVGSVAVSEKGWRIGKGEGYADLEYAMMVSMGAVSQGTPVVTIVHDCQVVDIPEALLEDHDLTVDYILTPTRVITTGCERPKPAGIAWSKISCEMLGKMPILRSLRHQEEQAGKDVTLRDGPRSPPGATRSPRDLAPPELGSVPLSSVQIGNLPRDARVSELKRALSALGVAPSRLTWQGPQHGAFLHYRDPAEAQQAIACLQGFRLGANTVRVVLARQQRASDLVGSHTAEPLPDHQPAIAGP.

The span at 245 to 258 (EEQAGKDVTLRDGP) shows a compositional bias: basic and acidic residues. Disordered regions lie at residues 245-283 (EEQAGKDVTLRDGPRSPPGATRSPRDLAPPELGSVPLSS) and 361-380 (LVGSHTAEPLPDHQPAIAGP). An RRM domain is found at 282-355 (SSVQIGNLPR…NTVRVVLARQ (74 aa)).

The chain is Methenyltetrahydrofolate synthase domain-containing protein (MTHFSD) from Bos taurus (Bovine).